We begin with the raw amino-acid sequence, 260 residues long: 5'-nucleotidase SurE (260 aa).

Residues D8, D9, S39, and N91 each contribute to the a divalent metal cation site.

It belongs to the SurE nucleotidase family. A divalent metal cation is required as a cofactor.

Its subcellular location is the cytoplasm. It carries out the reaction a ribonucleoside 5'-phosphate + H2O = a ribonucleoside + phosphate. Nucleotidase that shows phosphatase activity on nucleoside 5'-monophosphates. In Acidovorax ebreus (strain TPSY) (Diaphorobacter sp. (strain TPSY)), this protein is 5'-nucleotidase SurE.